We begin with the raw amino-acid sequence, 962 residues long: CRACD-like protein (962 aa).

3 disordered regions span residues 38 to 102, 131 to 174, and 212 to 871; these read GKKK…PESG, NVKM…HDVG, and PAES…QEPV. Over residues 46-61 the composition is skewed to polar residues; sequence PSSTGSSTWKQSQTRN. Serine 92 carries the post-translational modification Phosphoserine. A compositionally biased stretch (basic residues) spans 224 to 244; the sequence is AKHKLQVKPRNQRSSKMRRLS. The segment covering 245 to 256 has biased composition (polar residues); the sequence is SRAQSESLSDLT. Residues 266 to 278 are compositionally biased toward basic and acidic residues; it reads EKPLLEVSPEERP. Composition is skewed to pro residues over residues 292 to 303 and 354 to 365; these read EPGPPAPLPPPG and PPSPPEGPPNPG. Residues 407–425 show a composition bias toward low complexity; the sequence is PEGDTTPPETDPAATSEAP. 2 stretches are compositionally biased toward basic and acidic residues: residues 429–440 and 459–480; these read DGPERSVPKEAE and EPER…ERIG. Serine 490 is modified (phosphoserine). The span at 503–521 shows a compositional bias: low complexity; it reads AAASEGPAASPPLAAAESP. 4 stretches are compositionally biased toward basic and acidic residues: residues 536 to 546, 555 to 570, 631 to 642, and 709 to 728; these read APERPKAERAE, AAPE…ELRG, KLAERGPQDSGD, and YSAE…EEKC. A compositionally biased stretch (pro residues) spans 753-764; it reads PEPLSSKPPLPR. Basic and acidic residues-rich tracts occupy residues 784–806 and 844–869; these read PGER…RGAE and QEDK…RGQE.

The polypeptide is CRACD-like protein (Homo sapiens (Human)).